The following is a 343-amino-acid chain: D-alanine--D-alanine ligase (343 aa).

The ATP-grasp domain maps to 129–335; that stretch reads KYVLENFGVK…YGELISEIIE (207 aa). Residue 162–217 participates in ATP binding; sequence ENKLGYDVFIKPSNSGSSVGISKAHNREELEAGLEEALKFDRKVLVEVALNAREIE. Mg(2+)-binding residues include Asp-288, Glu-302, and Asn-304.

The protein belongs to the D-alanine--D-alanine ligase family. Mg(2+) is required as a cofactor. It depends on Mn(2+) as a cofactor.

The protein resides in the cytoplasm. It catalyses the reaction 2 D-alanine + ATP = D-alanyl-D-alanine + ADP + phosphate + H(+). It participates in cell wall biogenesis; peptidoglycan biosynthesis. Its function is as follows. Cell wall formation. This chain is D-alanine--D-alanine ligase, found in Clostridium novyi (strain NT).